Consider the following 150-residue polypeptide: 3-dehydroquinate dehydratase (150 aa).

The active-site Proton acceptor is the Tyr26. The substrate site is built by Asn75, His81, and Asp88. The active-site Proton donor is His101. Substrate-binding positions include Leu102–Ser103 and Arg112.

The protein belongs to the type-II 3-dehydroquinase family. As to quaternary structure, homododecamer.

It catalyses the reaction 3-dehydroquinate = 3-dehydroshikimate + H2O. Its pathway is metabolic intermediate biosynthesis; chorismate biosynthesis; chorismate from D-erythrose 4-phosphate and phosphoenolpyruvate: step 3/7. Its function is as follows. Catalyzes a trans-dehydration via an enolate intermediate. The sequence is that of 3-dehydroquinate dehydratase from Shewanella loihica (strain ATCC BAA-1088 / PV-4).